We begin with the raw amino-acid sequence, 175 residues long: CDP-archaeol synthase (175 aa).

The next 4 helical transmembrane spans lie at 41–61 (GLFSGIFCGFIAGCIEIWLSS), 82–102 (LIVVLALASGALFGDMFKSFF), 122–142 (FVVGAWVFTYLVAPEWFVSNF), and 150–170 (VIIITPLLHLTTNIIGYLIGV).

It belongs to the CDP-archaeol synthase family. Mg(2+) serves as cofactor.

It localises to the cell membrane. The catalysed reaction is 2,3-bis-O-(geranylgeranyl)-sn-glycerol 1-phosphate + CTP + H(+) = CDP-2,3-bis-O-(geranylgeranyl)-sn-glycerol + diphosphate. The protein operates within membrane lipid metabolism; glycerophospholipid metabolism. Its function is as follows. Catalyzes the formation of CDP-2,3-bis-(O-geranylgeranyl)-sn-glycerol (CDP-archaeol) from 2,3-bis-(O-geranylgeranyl)-sn-glycerol 1-phosphate (DGGGP) and CTP. This reaction is the third ether-bond-formation step in the biosynthesis of archaeal membrane lipids. This chain is CDP-archaeol synthase, found in Methanosarcina barkeri (strain Fusaro / DSM 804).